Consider the following 311-residue polypeptide: 4-hydroxy-tetrahydrodipicolinate synthase (311 aa).

Threonine 51 is a pyruvate binding site. The active-site Proton donor/acceptor is the tyrosine 140. The Schiff-base intermediate with substrate role is filled by lysine 168. Isoleucine 209 is a binding site for pyruvate.

It belongs to the DapA family. In terms of assembly, homotetramer; dimer of dimers.

It localises to the cytoplasm. It catalyses the reaction L-aspartate 4-semialdehyde + pyruvate = (2S,4S)-4-hydroxy-2,3,4,5-tetrahydrodipicolinate + H2O + H(+). Its pathway is amino-acid biosynthesis; L-lysine biosynthesis via DAP pathway; (S)-tetrahydrodipicolinate from L-aspartate: step 3/4. Its function is as follows. Catalyzes the condensation of (S)-aspartate-beta-semialdehyde [(S)-ASA] and pyruvate to 4-hydroxy-tetrahydrodipicolinate (HTPA). The polypeptide is 4-hydroxy-tetrahydrodipicolinate synthase (Streptococcus pneumoniae (strain Hungary19A-6)).